A 342-amino-acid chain; its full sequence is D-erythrose-4-phosphate dehydrogenase (342 aa).

Residue 12–13 coordinates NAD(+); sequence RI. Substrate contacts are provided by residues 154-156, Arg200, 213-214, and Arg236; these read SCT and TK. The Nucleophile role is filled by Cys155. NAD(+) is bound at residue Asn318.

The protein belongs to the glyceraldehyde-3-phosphate dehydrogenase family. Epd subfamily. In terms of assembly, homotetramer.

The protein localises to the cytoplasm. It catalyses the reaction D-erythrose 4-phosphate + NAD(+) + H2O = 4-phospho-D-erythronate + NADH + 2 H(+). It functions in the pathway cofactor biosynthesis; pyridoxine 5'-phosphate biosynthesis; pyridoxine 5'-phosphate from D-erythrose 4-phosphate: step 1/5. Its function is as follows. Catalyzes the NAD-dependent conversion of D-erythrose 4-phosphate to 4-phosphoerythronate. The protein is D-erythrose-4-phosphate dehydrogenase of Klebsiella pneumoniae subsp. pneumoniae (strain ATCC 700721 / MGH 78578).